Reading from the N-terminus, the 432-residue chain is Glutamate-1-semialdehyde 2,1-aminomutase (432 aa).

N6-(pyridoxal phosphate)lysine is present on K265.

Belongs to the class-III pyridoxal-phosphate-dependent aminotransferase family. HemL subfamily. In terms of assembly, homodimer. Pyridoxal 5'-phosphate serves as cofactor.

It is found in the cytoplasm. The catalysed reaction is (S)-4-amino-5-oxopentanoate = 5-aminolevulinate. It participates in porphyrin-containing compound metabolism; protoporphyrin-IX biosynthesis; 5-aminolevulinate from L-glutamyl-tRNA(Glu): step 2/2. The chain is Glutamate-1-semialdehyde 2,1-aminomutase from Photobacterium profundum (strain SS9).